The following is a 320-amino-acid chain: Ferrochelatase (320 aa).

Fe cation contacts are provided by His194 and Glu275.

Belongs to the ferrochelatase family.

The protein localises to the cytoplasm. It catalyses the reaction heme b + 2 H(+) = protoporphyrin IX + Fe(2+). Its pathway is porphyrin-containing compound metabolism; protoheme biosynthesis; protoheme from protoporphyrin-IX: step 1/1. Its function is as follows. Catalyzes the ferrous insertion into protoporphyrin IX. This chain is Ferrochelatase, found in Stenotrophomonas maltophilia (strain R551-3).